Reading from the N-terminus, the 338-residue chain is Microtubule-associated protein RP/EB family member 2 (338 aa).

The segment at 1-21 (MPGPTQALSPNGENNNDIIQD) is disordered. Residues 57-159 (TMSRHDIIAW…FIQWFKKFFD (103 aa)) enclose the Calponin-homology (CH) domain. Disordered stretches follow at residues 171–241 (EARQ…KDLE) and 300–338 (SEEH…FHFV). Over residues 200–234 (SPTAGAAKSSPASKPGSTPSRPSSAKKAAPSSSAS) the composition is skewed to low complexity. The EB1 C-terminal domain occupies 236-306 (SDKDLETQVI…LYASEEHESH (71 aa)). Residues 300–327 (SEEHESHTEEHEGEEQVHEQPSSRRSTD) are compositionally biased toward basic and acidic residues. Positions 328 to 338 (SRSVSDNFHFV) are enriched in low complexity.

It belongs to the MAPRE family.

The protein localises to the cytoplasm. It is found in the cytoskeleton. Its function is as follows. May be involved in microtubule polymerization, and spindle function by stabilizing microtubules and anchoring them at centrosomes. The protein is Microtubule-associated protein RP/EB family member 2 (MAPRE2) of Gallus gallus (Chicken).